Reading from the N-terminus, the 182-residue chain is UPF0587 protein YCR090C (182 aa).

Positions 36, 39, 70, and 73 each coordinate Zn(2+).

It belongs to the UPF0587 family.

This is UPF0587 protein YCR090C from Saccharomyces cerevisiae (strain ATCC 204508 / S288c) (Baker's yeast).